We begin with the raw amino-acid sequence, 225 residues long: Urease accessory protein UreG 2 (225 aa).

31–38 (GPVGSGKT) provides a ligand contact to GTP.

Belongs to the SIMIBI class G3E GTPase family. UreG subfamily. As to quaternary structure, homodimer. UreD, UreF and UreG form a complex that acts as a GTP-hydrolysis-dependent molecular chaperone, activating the urease apoprotein by helping to assemble the nickel containing metallocenter of UreC. The UreE protein probably delivers the nickel.

It is found in the cytoplasm. Its function is as follows. Facilitates the functional incorporation of the urease nickel metallocenter. This process requires GTP hydrolysis, probably effectuated by UreG. This Streptomyces griseus subsp. griseus (strain JCM 4626 / CBS 651.72 / NBRC 13350 / KCC S-0626 / ISP 5235) protein is Urease accessory protein UreG 2.